The chain runs to 679 residues: DNA ligase (679 aa).

Residues 43 to 47, 92 to 93, and Glu124 contribute to the NAD(+) site; these read DYVYD and SM. Lys126 (N6-AMP-lysine intermediate) is an active-site residue. Arg147, Glu181, Lys297, and Lys321 together coordinate NAD(+). Residues Cys415, Cys418, Cys433, and Cys438 each coordinate Zn(2+). In terms of domain architecture, BRCT spans 599–679; it reads TESAEWAGKR…RFDQAMKEEN (81 aa).

This sequence belongs to the NAD-dependent DNA ligase family. LigA subfamily. Mg(2+) serves as cofactor. Requires Mn(2+) as cofactor.

The catalysed reaction is NAD(+) + (deoxyribonucleotide)n-3'-hydroxyl + 5'-phospho-(deoxyribonucleotide)m = (deoxyribonucleotide)n+m + AMP + beta-nicotinamide D-nucleotide.. DNA ligase that catalyzes the formation of phosphodiester linkages between 5'-phosphoryl and 3'-hydroxyl groups in double-stranded DNA using NAD as a coenzyme and as the energy source for the reaction. It is essential for DNA replication and repair of damaged DNA. This chain is DNA ligase, found in Limosilactobacillus fermentum (strain NBRC 3956 / LMG 18251) (Lactobacillus fermentum).